A 141-amino-acid polypeptide reads, in one-letter code: Large ribosomal subunit protein uL13 (141 aa).

This sequence belongs to the universal ribosomal protein uL13 family. In terms of assembly, part of the 50S ribosomal subunit.

Its function is as follows. This protein is one of the early assembly proteins of the 50S ribosomal subunit, although it is not seen to bind rRNA by itself. It is important during the early stages of 50S assembly. This Helicobacter pylori (strain Shi470) protein is Large ribosomal subunit protein uL13.